Here is a 173-residue protein sequence, read N- to C-terminus: Probable DNA-directed RNA polymerase subunit delta (173 aa).

The 68-residue stretch at 14 to 81 (LSMIELGVKI…GSGMWGLKRW (68 aa)) folds into the HTH HARE-type domain. The interval 86–173 (QAEEEITEEP…EDENDDDNTR (88 aa)) is disordered. Over residues 109 to 173 (IDDVDDDLDV…EDENDDDNTR (65 aa)) the composition is skewed to acidic residues.

Belongs to the RpoE family. In terms of assembly, RNAP is composed of a core of 2 alpha, a beta and a beta' subunits. The core is associated with a delta subunit and one of several sigma factors.

Participates in both the initiation and recycling phases of transcription. In the presence of the delta subunit, RNAP displays an increased specificity of transcription, a decreased affinity for nucleic acids, and an increased efficiency of RNA synthesis because of enhanced recycling. This chain is Probable DNA-directed RNA polymerase subunit delta, found in Oceanobacillus iheyensis (strain DSM 14371 / CIP 107618 / JCM 11309 / KCTC 3954 / HTE831).